Reading from the N-terminus, the 338-residue chain is MRKITTSAYMPTEIEVKSVSENVANITAYPFEAGYAVTLAHPLRRLLYTSTVGFAPIGVKIKGVSHEFDSMRGMLEDVAFFIINLKKIRFKLKSGSEREVIEYSFKGPKEITGADLNNDLVEIVNPDAYLATINEDAELNFSVIIQKGIGYVPSEEIREEIEDEYIALDAFFTPVKKAVYEIQNVLVEDDPDYEKIVFTITTDGQVGPVEAFKNCLEAMYQQMSVFKGILDIDVSAPVASSSASGEFSKLLSSVEDLNLSARSFNCLDKAEIRFIGELALMDENELKELKNLGKKSLEEIKAVMEEIGYPVGVDVLKDSKEQLRKKITELKSQMSAKE.

Positions 1-230 (MRKITTSAYM…QQMSVFKGIL (230 aa)) are alpha N-terminal domain (alpha-NTD). An alpha C-terminal domain (alpha-CTD) region spans residues 247–338 (FSKLLSSVED…ELKSQMSAKE (92 aa)).

It belongs to the RNA polymerase alpha chain family. In terms of assembly, homodimer. The RNAP catalytic core consists of 2 alpha, 1 beta, 1 beta' and 1 omega subunit. When a sigma factor is associated with the core the holoenzyme is formed, which can initiate transcription.

The catalysed reaction is RNA(n) + a ribonucleoside 5'-triphosphate = RNA(n+1) + diphosphate. In terms of biological role, DNA-dependent RNA polymerase catalyzes the transcription of DNA into RNA using the four ribonucleoside triphosphates as substrates. This Campylobacter concisus (strain 13826) protein is DNA-directed RNA polymerase subunit alpha.